Here is a 30-residue protein sequence, read N- to C-terminus: Putative cytochrome bd-II ubiquinol oxidase subunit AppX (30 aa).

Residues 4–24 traverse the membrane as a helical segment; that stretch reads LLWFVGILLMCSLSTLVLVWL.

It belongs to the cytochrome ubiquinol oxidase subunit X family. In terms of assembly, able to interact with CydA and CydB upon overexpression.

It is found in the cell inner membrane. In terms of biological role, might be part of cytochrome bd-II oxidase (appB and appC). Able to restore reductant resistance to a cydX deletion mutant upon overexpression. CydX and this protein may have some functional overlap. In Escherichia coli (strain K12), this protein is Putative cytochrome bd-II ubiquinol oxidase subunit AppX (appX).